We begin with the raw amino-acid sequence, 969 residues long: Bifunctional glutamine synthetase adenylyltransferase/adenylyl-removing enzyme (969 aa).

The interval 1-456 (MNWQANIHKL…HFEQLFAAPH (456 aa)) is adenylyl removase. The interval 466 to 969 (EKRLAEVWLG…SALLEDESAK (504 aa)) is adenylyl transferase.

This sequence belongs to the GlnE family. Mg(2+) serves as cofactor.

It catalyses the reaction [glutamine synthetase]-O(4)-(5'-adenylyl)-L-tyrosine + phosphate = [glutamine synthetase]-L-tyrosine + ADP. It carries out the reaction [glutamine synthetase]-L-tyrosine + ATP = [glutamine synthetase]-O(4)-(5'-adenylyl)-L-tyrosine + diphosphate. Its function is as follows. Involved in the regulation of glutamine synthetase GlnA, a key enzyme in the process to assimilate ammonia. When cellular nitrogen levels are high, the C-terminal adenylyl transferase (AT) inactivates GlnA by covalent transfer of an adenylyl group from ATP to specific tyrosine residue of GlnA, thus reducing its activity. Conversely, when nitrogen levels are low, the N-terminal adenylyl removase (AR) activates GlnA by removing the adenylyl group by phosphorolysis, increasing its activity. The regulatory region of GlnE binds the signal transduction protein PII (GlnB) which indicates the nitrogen status of the cell. The chain is Bifunctional glutamine synthetase adenylyltransferase/adenylyl-removing enzyme from Nitrosococcus oceani (strain ATCC 19707 / BCRC 17464 / JCM 30415 / NCIMB 11848 / C-107).